We begin with the raw amino-acid sequence, 430 residues long: Enolase (430 aa).

Residue Q165 coordinates (2R)-2-phosphoglycerate. E207 functions as the Proton donor in the catalytic mechanism. 3 residues coordinate Mg(2+): D244, E287, and D314. The (2R)-2-phosphoglycerate site is built by K339, R368, S369, and K390. K339 acts as the Proton acceptor in catalysis.

Belongs to the enolase family. As to quaternary structure, component of the RNA degradosome, a multiprotein complex involved in RNA processing and mRNA degradation. Requires Mg(2+) as cofactor.

It is found in the cytoplasm. The protein resides in the secreted. Its subcellular location is the cell surface. The catalysed reaction is (2R)-2-phosphoglycerate = phosphoenolpyruvate + H2O. Its pathway is carbohydrate degradation; glycolysis; pyruvate from D-glyceraldehyde 3-phosphate: step 4/5. Its function is as follows. Catalyzes the reversible conversion of 2-phosphoglycerate (2-PG) into phosphoenolpyruvate (PEP). It is essential for the degradation of carbohydrates via glycolysis. The sequence is that of Enolase from Stenotrophomonas maltophilia (strain K279a).